We begin with the raw amino-acid sequence, 196 residues long: Heat shock protein beta-8 (196 aa).

The interval 1 to 28 (MADGQLPFPCSYPSRLRRDPFRDSPLSS) is disordered. Ser-24 and Ser-57 each carry phosphoserine. Thr-63 is subject to Phosphothreonine. Asymmetric dimethylarginine occurs at positions 71 and 78. The region spanning 74 to 185 (TATARFGVPA…PFGESSFNNE (112 aa)) is the sHSP domain. Positions 176–196 (PFGESSFNNELPQDNQEVTCS) are disordered. The span at 178-196 (GESSFNNELPQDNQEVTCS) shows a compositional bias: polar residues.

It belongs to the small heat shock protein (HSP20) family. As to quaternary structure, monomer. Forms a ternary complex with BAG3 and HSPA1A. Component of the chaperone-assisted selective autophagy (CASA) complex consisting of BAG3, HSPA8/HSC70, HSPB8 and STUB1/CHIP. Interacts with HSPB1. Interacts with DNAJB6. Interacts with BAG3. Phosphorylated.

Its subcellular location is the cytoplasm. It is found in the nucleus. Its function is as follows. Involved in the chaperone-assisted selective autophagy (CASA), a crucial process for protein quality control, particularly in mechanical strained cells and tissues such as muscle. Displays temperature-dependent chaperone activity. In Rattus norvegicus (Rat), this protein is Heat shock protein beta-8 (Hspb8).